A 407-amino-acid polypeptide reads, in one-letter code: E3 ubiquitin-protein ligase TRIM13 (407 aa).

The RING-type zinc-finger motif lies at 10–58 (CPICCSLFDDPRVLPCSHNFCKKCLEGILEGSVRNSLWRPAPFKCPTCR). The B box-type zinc-finger motif lies at 89–131 (PKMPVCKGHLGQPLNIFCLTDMQLICGICATRGEHTKHVFCSI). Cys94, His97, Cys117, and His123 together coordinate Zn(2+). A coiled-coil region spans residues 172-200 (LQLLTKDSDKVKEFFEKLQHTLDQKKNEI). The helical transmembrane segment at 317-337 (LFLLILLLGLVIVFGPTMFLE) threads the bilayer.

It belongs to the TRIM/RBCC family. As to quaternary structure, interacts (via C-terminal domain) with VCP. Interacts with AKT1; the interaction ubiquitinates AKT1 and leads to its proteasomal degradation. Interacts with MDM2; the interaction ubiquitinates AKT1 and leads to its proteasomal degradation. Interacts with p62/SQSTM1. Interacts with TRAF6. Interacts with IKBKG/NEMO. Post-translationally, auto-ubiquitinated; requires the RING-type zinc finger. Auto-polyubiquitination leads to proteasomal degradation.

The protein resides in the endoplasmic reticulum membrane. It catalyses the reaction S-ubiquitinyl-[E2 ubiquitin-conjugating enzyme]-L-cysteine + [acceptor protein]-L-lysine = [E2 ubiquitin-conjugating enzyme]-L-cysteine + N(6)-ubiquitinyl-[acceptor protein]-L-lysine.. It participates in protein modification; protein ubiquitination. Its function is as follows. Endoplasmic reticulum (ER) membrane anchored E3 ligase involved in the retrotranslocation and turnover of membrane and secretory proteins from the ER through a set of processes named ER-associated degradation (ERAD). This process acts on misfolded proteins as well as in the regulated degradation of correctly folded proteins. Enhances ionizing radiation-induced p53/TP53 stability and apoptosis via ubiquitinating MDM2 and AKT1 and decreasing AKT1 kinase activity through MDM2 and AKT1 proteasomal degradation. Regulates ER stress-induced autophagy, and may act as a tumor suppressor. Also plays a role in innate immune response by stimulating NF-kappa-B activity in the TLR2 signaling pathway. Ubiquitinates TRAF6 via the 'Lys-29'-linked polyubiquitination chain resulting in NF-kappa-B activation. Participates as well in T-cell receptor-mediated NF-kappa-B activation. In the presence of TNF, modulates the IKK complex by regulating IKBKG/NEMO ubiquitination leading to the repression of NF-kappa-B. The polypeptide is E3 ubiquitin-protein ligase TRIM13 (TRIM13) (Homo sapiens (Human)).